Reading from the N-terminus, the 560-residue chain is Putative protease Do-like 11, mitochondrial (560 aa).

A mitochondrion-targeting transit peptide spans 1 to 65 (MFFRPCVHTV…RRSSTSAAER (65 aa)). Residues 117-302 (TEYSKSKPWK…ESRQYSCFGS (186 aa)) are serine protease. Catalysis depends on charge relay system residues His150, Asp184, and Ser258. Residues 288–384 (ITSVQESRQY…YLVSMKKPGE (97 aa)) form the PDZ domain.

The protein belongs to the peptidase S1C family.

It is found in the mitochondrion membrane. Functionally, putative serine protease. This chain is Putative protease Do-like 11, mitochondrial (DEGP11), found in Arabidopsis thaliana (Mouse-ear cress).